Here is a 273-residue protein sequence, read N- to C-terminus: Mitochondrial distribution and morphology protein 12 (273 aa).

Residues 1–273 (MSIDFDWSKL…LVWPSYITIE (273 aa)) enclose the SMP-LTD domain. Positions 124-145 (LTSPIPESRPSTPMDNHQERDR) are disordered.

The protein belongs to the MDM12 family. In terms of assembly, component of the ER-mitochondria encounter structure (ERMES) or MDM complex, composed of mmm1, mdm10, mdm12 and mdm34. A mmm1 homodimer associates with one molecule of mdm12 on each side in a pairwise head-to-tail manner, and the SMP-LTD domains of mmm1 and mdm12 generate a continuous hydrophobic tunnel for phospholipid trafficking.

It localises to the mitochondrion outer membrane. The protein localises to the endoplasmic reticulum membrane. Component of the ERMES/MDM complex, which serves as a molecular tether to connect the endoplasmic reticulum (ER) and mitochondria. Components of this complex are involved in the control of mitochondrial shape and protein biogenesis, and function in nonvesicular lipid trafficking between the ER and mitochondria. Mdm12 is required for the interaction of the ER-resident membrane protein mmm1 and the outer mitochondrial membrane-resident beta-barrel protein mdm10. The mdm12-mmm1 subcomplex functions in the major beta-barrel assembly pathway that is responsible for biogenesis of all mitochondrial outer membrane beta-barrel proteins, and acts in a late step after the SAM complex. The mdm10-mdm12-mmm1 subcomplex further acts in the TOM40-specific pathway after the action of the mdm12-mmm1 complex. Essential for establishing and maintaining the structure of mitochondria and maintenance of mtDNA nucleoids. This is Mitochondrial distribution and morphology protein 12 from Schizosaccharomyces pombe (strain 972 / ATCC 24843) (Fission yeast).